The primary structure comprises 484 residues: MSQVNRRKVLFVTSELADLVKTGGLGDVSAALPRAMRHLHDVRVLIPGYPQVINSGNPIHIISQLGGHAALPPCKVGRMDMKDGLVIYVLICPELYEREGTPYADTNGRDWSDNHIRFARLGLAAAEFAAGEVKSQWCPELVHAHDWPAGLAPAYMRWRGQSTPSIFTVHNLAYQGTVSTASSRELGIPDEAITPEGMEFYGKLSFIKAGMAFANHITTVSATYAREITTPEFGCGLEGFLQSKADKGQLSGIPNGIDESWDAATDEHLICHFAPNEWTRKEINADYVRELFELDASSGPLYAVVSRLVYQKGLDLTIGVAEHIVNNGGQIAIIGRGEPEEEDAMRELAARFPGRIGVRIGFNETDARRMFAGSDFLLMPSRYEPCGLSQMYAQRFGSLPVARNTGGLADTIEDGVTGFLFNESTVESYTEALNRTFQVFAHPELLNAMRCRAMAAPFNWHQAVEPYAELYRDLLKKNVSMTSN.

Residue lysine 21 participates in ADP-alpha-D-glucose binding.

It belongs to the glycosyltransferase 1 family. Bacterial/plant glycogen synthase subfamily.

The catalysed reaction is [(1-&gt;4)-alpha-D-glucosyl](n) + ADP-alpha-D-glucose = [(1-&gt;4)-alpha-D-glucosyl](n+1) + ADP + H(+). The protein operates within glycan biosynthesis; glycogen biosynthesis. Its function is as follows. Synthesizes alpha-1,4-glucan chains using ADP-glucose. This is Glycogen synthase from Pseudomonas syringae pv. tomato (strain ATCC BAA-871 / DC3000).